Consider the following 325-residue polypeptide: DNA-directed RNA polymerase subunit alpha (325 aa).

The alpha N-terminal domain (alpha-NTD) stretch occupies residues 1–238; the sequence is MSLKSLLKGF…EHLTVFINFE (238 aa). Positions 254–325 are alpha C-terminal domain (alpha-CTD); the sequence is KLKASLSKHV…LGLSFGMRDF (72 aa).

Belongs to the RNA polymerase alpha chain family. Homodimer. The RNAP catalytic core consists of 2 alpha, 1 beta, 1 beta' and 1 omega subunit. When a sigma factor is associated with the core the holoenzyme is formed, which can initiate transcription.

It catalyses the reaction RNA(n) + a ribonucleoside 5'-triphosphate = RNA(n+1) + diphosphate. DNA-dependent RNA polymerase catalyzes the transcription of DNA into RNA using the four ribonucleoside triphosphates as substrates. In Leptospira borgpetersenii serovar Hardjo-bovis (strain JB197), this protein is DNA-directed RNA polymerase subunit alpha.